We begin with the raw amino-acid sequence, 152 residues long: Ribonuclease H (152 aa).

The RNase H type-1 domain maps to 1–142 (MGSKVVIYTD…ADKLAVQGRE (142 aa)). Positions 10, 48, 70, and 134 each coordinate Mg(2+).

Belongs to the RNase H family. As to quaternary structure, monomer. Mg(2+) is required as a cofactor.

Its subcellular location is the cytoplasm. It catalyses the reaction Endonucleolytic cleavage to 5'-phosphomonoester.. Functionally, endonuclease that specifically degrades the RNA of RNA-DNA hybrids. In Rickettsia massiliae (strain Mtu5), this protein is Ribonuclease H.